The primary structure comprises 496 residues: Nitric oxide synthase, inducible (496 aa).

FMN is bound by residues cysteine 6, glutamate 32, and glutamine 36. One can recognise an FAD-binding FR-type domain in the interval 101–341 (KNLFTMRLRS…VRSVSGFQLP (241 aa)). Arginine 121 contacts NADP(+). Residues histidine 143, arginine 277, tyrosine 279, serine 280, threonine 295, and alanine 297 each contribute to the FAD site. Threonine 300 contacts NADP(+). Residues tyrosine 301, valine 314, cysteine 315, and serine 316 each contribute to the FAD site. NADP(+) is bound by residues threonine 355, arginine 388, serine 417, arginine 418, lysine 424, tyrosine 426, glutamine 428, and aspartate 461.

It belongs to the NOS family. Homodimer. Interacts with NHERF1. Interacts with GAPDH; induced by oxidatively-modified low-densitity lipoprotein (LDL(ox)). Interacts with S100A8 and S100A9 to form the iNOS-S100A8/9 transnitrosylase complex. Interacts with SPSB1, SPSB2 and SPSB4. Interacts with ELOC and CUL5 in the presence of SPSB1 or SPSB2 or SPSB4. Forms a complex with ASL, ASS1 and HSP90AA1; the complex regulates cell-autonomous L-arginine synthesis and citrulline recycling while channeling extracellular L-arginine to nitric oxide synthesis pathway. Heme b is required as a cofactor. It depends on FAD as a cofactor. FMN serves as cofactor. The cofactor is (6R)-L-erythro-5,6,7,8-tetrahydrobiopterin. In terms of processing, polyubiquitinated; mediated by SPSB1, SPSB2 and SPSB4, leading to proteasomal degradation.

It localises to the cytoplasm. It is found in the cytosol. It carries out the reaction 2 L-arginine + 3 NADPH + 4 O2 + H(+) = 2 L-citrulline + 2 nitric oxide + 3 NADP(+) + 4 H2O. Its activity is regulated as follows. Not stimulated by calcium/calmodulin. Its function is as follows. Produces nitric oxide (NO) which is a messenger molecule with diverse functions throughout the body. In macrophages, NO mediates tumoricidal and bactericidal actions. Also has nitrosylase activity and mediates cysteine S-nitrosylation of cytoplasmic target proteins such PTGS2/COX2. As component of the iNOS-S100A8/9 transnitrosylase complex involved in the selective inflammatory stimulus-dependent S-nitrosylation of GAPDH implicated in regulation of the GAIT complex activity and probably multiple targets including ANXA5, EZR, MSN and VIM. Involved in inflammation, enhances the synthesis of pro-inflammatory mediators such as IL6 and IL8. In Oryctolagus cuniculus (Rabbit), this protein is Nitric oxide synthase, inducible (NOS2).